The primary structure comprises 352 residues: Alanine racemase (352 aa).

K33 serves as the catalytic Proton acceptor; specific for D-alanine. Position 33 is an N6-(pyridoxal phosphate)lysine (K33). R129 provides a ligand contact to substrate. Y250 acts as the Proton acceptor; specific for L-alanine in catalysis. Substrate is bound at residue M298.

It belongs to the alanine racemase family. It depends on pyridoxal 5'-phosphate as a cofactor.

It carries out the reaction L-alanine = D-alanine. The protein operates within amino-acid biosynthesis; D-alanine biosynthesis; D-alanine from L-alanine: step 1/1. Functionally, catalyzes the interconversion of L-alanine and D-alanine. May also act on other amino acids. This chain is Alanine racemase (alr), found in Neisseria gonorrhoeae (strain ATCC 700825 / FA 1090).